Reading from the N-terminus, the 119-residue chain is Protein TusC (119 aa).

Belongs to the DsrF/TusC family. In terms of assembly, heterohexamer, formed by a dimer of trimers. The hexameric TusBCD complex contains 2 copies each of TusB, TusC and TusD. The TusBCD complex interacts with TusE.

It localises to the cytoplasm. Its function is as follows. Part of a sulfur-relay system required for 2-thiolation of 5-methylaminomethyl-2-thiouridine (mnm(5)s(2)U) at tRNA wobble positions. This is Protein TusC from Pectobacterium carotovorum subsp. carotovorum (strain PC1).